A 323-amino-acid polypeptide reads, in one-letter code: Large ribosomal subunit protein uL10 (323 aa).

The tract at residues 298–323 (AAAAPAAAAEPEEEDDDDDFGMGALF) is disordered. Positions 307–317 (EPEEEDDDDDF) are enriched in acidic residues.

The protein belongs to the universal ribosomal protein uL10 family. As to quaternary structure, P0 forms a pentameric complex by interaction with dimers of P1 and P2. In terms of processing, phosphorylated.

Ribosomal protein P0 is the functional equivalent of E.coli protein L10. This is Large ribosomal subunit protein uL10 from Trypanosoma cruzi.